Reading from the N-terminus, the 62-residue chain is uncharacterized protein (62 aa).

The segment at 38 to 62 (VKSESDTADSKRSAEAKADEAPAKM) is disordered.

This is an uncharacterized protein from Schizosaccharomyces pombe (strain 972 / ATCC 24843) (Fission yeast).